A 259-amino-acid polypeptide reads, in one-letter code: UPF0246 protein VSAL_I2547 (259 aa).

This sequence belongs to the UPF0246 family.

The sequence is that of UPF0246 protein VSAL_I2547 from Aliivibrio salmonicida (strain LFI1238) (Vibrio salmonicida (strain LFI1238)).